Consider the following 647-residue polypeptide: NADP-dependent malic enzyme, chloroplastic (647 aa).

Residues 1 to 61 (MMSLNSSSVV…VDGAVKDVNA (61 aa)) constitute a chloroplast transit peptide. The active-site Proton donor is the Tyr195. Arg248 is a binding site for NAD(+). The active-site Proton acceptor is Lys266. Residues Glu338, Asp339, and Asp362 each contribute to the a divalent metal cation site. Asp362 is an NAD(+) binding site. Position 391 to 407 (391 to 407 (LFLGAGEAGTGIAELIA)) interacts with NADP(+). Asn503 is an NAD(+) binding site.

It belongs to the malic enzymes family. Homotetramer. It depends on Mg(2+) as a cofactor. The cofactor is Mn(2+).

The protein resides in the plastid. The protein localises to the chloroplast. It carries out the reaction (S)-malate + NADP(+) = pyruvate + CO2 + NADPH. It catalyses the reaction oxaloacetate + H(+) = pyruvate + CO2. It participates in photosynthesis; C3 acid pathway. The chloroplastic ME isoform decarboxylates malate shuttled from neighboring mesophyll cells. The CO(2) released is then refixed by ribulose-bisphosphate carboxylase. This pathway eliminates the photorespiratory loss of CO(2) that occurs in most plants. This chain is NADP-dependent malic enzyme, chloroplastic (MODA), found in Flaveria pringlei.